The primary structure comprises 180 residues: Large ribosomal subunit protein uL6 (180 aa).

This sequence belongs to the universal ribosomal protein uL6 family. In terms of assembly, part of the 50S ribosomal subunit.

Functionally, this protein binds to the 23S rRNA, and is important in its secondary structure. It is located near the subunit interface in the base of the L7/L12 stalk, and near the tRNA binding site of the peptidyltransferase center. The sequence is that of Large ribosomal subunit protein uL6 from Picrophilus torridus (strain ATCC 700027 / DSM 9790 / JCM 10055 / NBRC 100828 / KAW 2/3).